A 243-amino-acid polypeptide reads, in one-letter code: High affinity immunoglobulin epsilon receptor subunit beta (243 aa).

The interval methionine 1–glutamine 48 is disordered. Over methionine 1–glutamate 59 the chain is Cytoplasmic. A helical membrane pass occupies residues phenylalanine 60 to valine 79. The Extracellular segment spans residues cysteine 80–arginine 97. Residues alanine 98–methionine 117 traverse the membrane as a helical segment. Topologically, residues serine 118–serine 130 are cytoplasmic. The chain crosses the membrane as a helical span at residues leucine 131–leucine 150. The Extracellular segment spans residues asparagine 151–glutamate 179. The chain crosses the membrane as a helical span at residues leucine 180–isoleucine 199. Residues isoleucine 200–serine 243 are Cytoplasmic-facing. Phosphotyrosine is present on residues tyrosine 218 and tyrosine 224. Position 225 is a phosphoserine (serine 225). Tyrosine 228 carries the post-translational modification Phosphotyrosine.

It belongs to the MS4A family. Tetramer of an alpha chain, a beta chain, and two disulfide linked gamma chains. Binds LILRB1. Interacts with FES/FPS and LYN. Interacts with FGR. Phosphorylated on tyrosine residues by LYN.

It is found in the membrane. Its function is as follows. High affinity receptor that binds to the Fc region of immunoglobulins epsilon. Aggregation of FCER1 by multivalent antigens is required for the full mast cell response, including the release of preformed mediators (such as histamine) by degranulation and de novo production of lipid mediators and cytokines. Also mediates the secretion of important lymphokines. Binding of allergen to receptor-bound IgE leads to cell activation and the release of mediators responsible for the manifestations of allergy. The chain is High affinity immunoglobulin epsilon receptor subunit beta (Ms4a2) from Rattus norvegicus (Rat).